A 178-amino-acid polypeptide reads, in one-letter code: Inner membrane-spanning protein YciB (178 aa).

Transmembrane regions (helical) follow at residues 10 to 30 (IVLF…AVLM), 47 to 67 (LQTM…LTLA), 76 to 96 (WKPT…LWAL), 121 to 141 (WAWI…VLHW), and 151 to 171 (LWGY…IAPH).

It belongs to the YciB family.

It is found in the cell inner membrane. Its function is as follows. Plays a role in cell envelope biogenesis, maintenance of cell envelope integrity and membrane homeostasis. The chain is Inner membrane-spanning protein YciB from Verminephrobacter eiseniae (strain EF01-2).